Reading from the N-terminus, the 187-residue chain is GTP cyclohydrolase 1 (187 aa).

Residues C76, H79, and C148 each contribute to the Zn(2+) site.

This sequence belongs to the GTP cyclohydrolase I family. Toroid-shaped homodecamer, composed of two pentamers of five dimers.

The catalysed reaction is GTP + H2O = 7,8-dihydroneopterin 3'-triphosphate + formate + H(+). It participates in cofactor biosynthesis; 7,8-dihydroneopterin triphosphate biosynthesis; 7,8-dihydroneopterin triphosphate from GTP: step 1/1. This chain is GTP cyclohydrolase 1, found in Streptococcus agalactiae serotype V (strain ATCC BAA-611 / 2603 V/R).